Reading from the N-terminus, the 275-residue chain is Polyamine aminopropyltransferase (275 aa).

The PABS domain maps to 2-235 (ELWFTEKQTK…GLWTFTIGSK (234 aa)). Position 31 (Gln-31) interacts with S-methyl-5'-thioadenosine. 2 residues coordinate spermidine: His-62 and Asp-86. Residues Glu-106 and 137-138 (DG) contribute to the S-methyl-5'-thioadenosine site. The Proton acceptor role is filled by Asp-155. A spermidine-binding site is contributed by 155-158 (DSTE). Position 162 (Pro-162) interacts with S-methyl-5'-thioadenosine.

The protein belongs to the spermidine/spermine synthase family. Homodimer or homotetramer.

The protein localises to the cytoplasm. It catalyses the reaction S-adenosyl 3-(methylsulfanyl)propylamine + putrescine = S-methyl-5'-thioadenosine + spermidine + H(+). The protein operates within amine and polyamine biosynthesis; spermidine biosynthesis; spermidine from putrescine: step 1/1. In terms of biological role, catalyzes the irreversible transfer of a propylamine group from the amino donor S-adenosylmethioninamine (decarboxy-AdoMet) to putrescine (1,4-diaminobutane) to yield spermidine. In Bacillus cereus (strain ATCC 10987 / NRS 248), this protein is Polyamine aminopropyltransferase.